We begin with the raw amino-acid sequence, 384 residues long: Glucose-1-phosphate adenylyltransferase (384 aa).

Alpha-D-glucose 1-phosphate-binding positions include Tyr103, Gly168, 183 to 184 (EK), and Ser194.

It belongs to the bacterial/plant glucose-1-phosphate adenylyltransferase family. As to quaternary structure, homotetramer.

It catalyses the reaction alpha-D-glucose 1-phosphate + ATP + H(+) = ADP-alpha-D-glucose + diphosphate. The protein operates within glycan biosynthesis; glycogen biosynthesis. Involved in the biosynthesis of ADP-glucose, a building block required for the elongation reactions to produce glycogen. Catalyzes the reaction between ATP and alpha-D-glucose 1-phosphate (G1P) to produce pyrophosphate and ADP-Glc. This is Glucose-1-phosphate adenylyltransferase from Fusobacterium nucleatum subsp. nucleatum (strain ATCC 25586 / DSM 15643 / BCRC 10681 / CIP 101130 / JCM 8532 / KCTC 2640 / LMG 13131 / VPI 4355).